Here is a 1045-residue protein sequence, read N- to C-terminus: MDIS1-interacting receptor like kinase 2 (1045 aa).

A signal peptide spans 1–43; that stretch reads MNKTNPERKISLTSFKERMACKEKPRDLQVLLIISIVLSCSFA. At 44-709 the chain is on the extracellular side; that stretch reads VSATVEEANA…SKKSHKDRNL (666 aa). N-linked (GlcNAc...) asparagine glycans are attached at residues Asn63, Asn77, Asn99, and Asn119. LRR repeat units follow at residues 92–116, 117–140, 141–165, 166–189, 191–212, 213–237, 238–260, 262–285, 286–309, 311–333, 334–356, 357–381, 383–405, 406–429, 431–452, 453–476, 477–501, 502–525, 527–549, 550–573, 575–597, 598–620, 621–644, and 646–670; these read LGSIIRLNLTNTGIEGTFEDFPFSS, LPNLTFVDLSMNRFSGTISPLWGR, FSKLEYFDLSINQLVGEIPPELGDL, SNLDTLHLVENKLNGSIPSEIGRL, KVTEIAIYDNLLTGPIPSSFGN, LTKLVNLYLFINSLSGSIPSEIGNL, PNLRELCLDRNNLTGKIPSSFGN, KNVTLLNMFENQLSGEIPPEIGNM, TALDTLSLHTNKLTGPIPSTLGNI, TLAVLHLYLNQLNGSIPPELGEM, ESMIDLEISENKLTGPVPDSFGK, LTALEWLFLRDNQLSGPIPPGIANS, ELTVLQLDTNNFTGFLPDTICRG, GKLENLTLDDNHFEGPVPKSLRDC, SLIRVRFKGNSFSGDISEAFGV, YPTLNFIDLSNNNFHGQLSANWEQ, SQKLVAFILSNNSITGAIPPEIWNM, TQLSQLDLSSNRITGELPESISNI, RISKLQLNGNRLSGKIPSGIRLL, TNLEYLDLSSNRFSSEIPPTLNNL, RLYYMNLSRNDLDQTIPEGLTKL, SQLQMLDLSYNQLDGEISSQFRS, LQNLERLDLSHNNLSGQIPPSFKD, and LALTHVDVSHNNLQGPIPDNAAFRN. N-linked (GlcNAc...) asparagine glycans are attached at residues Asn179 and Asn212. Asn249, Asn263, and Asn284 each carry an N-linked (GlcNAc...) asparagine glycan. Residue Asn323 is glycosylated (N-linked (GlcNAc...) asparagine). Residues Asn380, Asn393, and Asn410 are each glycosylated (N-linked (GlcNAc...) asparagine). N-linked (GlcNAc...) asparagine glycans are attached at residues Asn487 and Asn500. N-linked (GlcNAc...) asparagine glycosylation occurs at Asn580. Residue Asn633 is glycosylated (N-linked (GlcNAc...) asparagine). N-linked (GlcNAc...) asparagine glycosylation occurs at Asn687. Residues 710–730 form a helical membrane-spanning segment; sequence IIYILVPIIGAIIILSVCAGI. The Cytoplasmic portion of the chain corresponds to 731-1045; that stretch reads FICFRKRTKQ…TMLSISTAFS (315 aa). Position 772 is a phosphothreonine (Thr772). The region spanning 775–1045 is the Protein kinase domain; it reads FDPKYLIGTG…TMLSISTAFS (271 aa). Residues 781–789 and Lys802 contribute to the ATP site; that span reads IGTGGHGKV. Phosphotyrosine occurs at positions 853 and 892. Asp905 serves as the catalytic Proton acceptor. A Phosphoserine modification is found at Ser938. A phosphotyrosine mark is found at Tyr946 and Tyr953.

The protein belongs to the protein kinase superfamily. Ser/Thr protein kinase family. In terms of assembly, interacts with MDIS1 and LURE1.2. Binds to SCOOP12; this interaction triggers the formation of complex between MIK2 and the BAK1/SERK3 and SERK4 coreceptors. As to expression, expressed in pollen tubes. Highly expressed in shoots, roots and leaves.

The protein resides in the cell membrane. The enzyme catalyses L-seryl-[protein] + ATP = O-phospho-L-seryl-[protein] + ADP + H(+). It catalyses the reaction L-threonyl-[protein] + ATP = O-phospho-L-threonyl-[protein] + ADP + H(+). Acts as a receptor of SCOOP peptides from Brassicaceae plants regulating multiple processing including plant growth, development and stress responses. Perception of SCOOP peptides induces the association of MIK2 with the coreceptors BAK1/SERK3 and SERK4 and relays the signaling through the activation of receptor-like cytosolic kinases (RLCKs) BIK1 and PBL1. Also able to detect SCOOP-like proteins (SCOOPL) present in fungal Fusarium spp. and bacterial Comamonadaceae to elicit various immune responses, including growth inhibition, ROS production, calcium Ca(2+) influx, MAPK activation and MYB51 promoter activation in roots, thus being required for resistance to several root pathogens. Involved in the pollen tube perception of the female signal. Required to trigger defense responses toward generalist herbivores such as Spodoptera littoralis, probably via the activation of jasmonate and indole glucosinolate biosynthesis. This is MDIS1-interacting receptor like kinase 2 from Arabidopsis thaliana (Mouse-ear cress).